We begin with the raw amino-acid sequence, 230 residues long: 5'-methylthioadenosine/S-adenosylhomocysteine nucleosidase (230 aa).

Glu12 functions as the Proton acceptor in the catalytic mechanism. Substrate contacts are provided by residues Gly78, Ile153, and 174-175; that span reads ME. Asp198 (proton donor) is an active-site residue.

It belongs to the PNP/UDP phosphorylase family. MtnN subfamily.

The enzyme catalyses S-adenosyl-L-homocysteine + H2O = S-(5-deoxy-D-ribos-5-yl)-L-homocysteine + adenine. It carries out the reaction S-methyl-5'-thioadenosine + H2O = 5-(methylsulfanyl)-D-ribose + adenine. It catalyses the reaction 5'-deoxyadenosine + H2O = 5-deoxy-D-ribose + adenine. It participates in amino-acid biosynthesis; L-methionine biosynthesis via salvage pathway; S-methyl-5-thio-alpha-D-ribose 1-phosphate from S-methyl-5'-thioadenosine (hydrolase route): step 1/2. Functionally, catalyzes the irreversible cleavage of the glycosidic bond in both 5'-methylthioadenosine (MTA) and S-adenosylhomocysteine (SAH/AdoHcy) to adenine and the corresponding thioribose, 5'-methylthioribose and S-ribosylhomocysteine, respectively. Also cleaves 5'-deoxyadenosine, a toxic by-product of radical S-adenosylmethionine (SAM) enzymes, into 5-deoxyribose and adenine. This Shewanella piezotolerans (strain WP3 / JCM 13877) protein is 5'-methylthioadenosine/S-adenosylhomocysteine nucleosidase.